The chain runs to 651 residues: Acetyl-coenzyme A synthetase (651 aa).

CoA is bound by residues 189-192 (RGGK), T311, and N335. Residues 387–389 (GEP), 411–416 (DTWWQT), D500, and R515 contribute to the ATP site. S523 provides a ligand contact to CoA. Position 526 (R526) interacts with ATP. 3 residues coordinate Mg(2+): V537, H539, and V542. R586 serves as a coordination point for CoA. Residue K611 is modified to N6-acetyllysine.

Belongs to the ATP-dependent AMP-binding enzyme family. The cofactor is Mg(2+). Acetylated. Deacetylation by the SIR2-homolog deacetylase activates the enzyme.

The catalysed reaction is acetate + ATP + CoA = acetyl-CoA + AMP + diphosphate. Its function is as follows. Catalyzes the conversion of acetate into acetyl-CoA (AcCoA), an essential intermediate at the junction of anabolic and catabolic pathways. AcsA undergoes a two-step reaction. In the first half reaction, AcsA combines acetate with ATP to form acetyl-adenylate (AcAMP) intermediate. In the second half reaction, it can then transfer the acetyl group from AcAMP to the sulfhydryl group of CoA, forming the product AcCoA. This Brucella melitensis biotype 2 (strain ATCC 23457) protein is Acetyl-coenzyme A synthetase.